A 204-amino-acid chain; its full sequence is UPF0637 protein SA0957 (204 aa).

This sequence belongs to the UPF0637 family.

The polypeptide is UPF0637 protein SA0957 (Staphylococcus aureus (strain N315)).